The sequence spans 307 residues: Aquaporin Lacbi1:387054 (307 aa).

The Cytoplasmic portion of the chain corresponds to 1–40 (MSNAPLVHLSDLQKRLRVFAVWEKVRNDGKVHWAIECFAE). Residues 41 to 61 (MFGVFLYVYFGLGSTAGWVIG) form a helical membrane-spanning segment. Residues 62 to 68 (NIIKETN) are Extracellular-facing. A helical membrane pass occupies residues 69–89 (LSSILQIGLAYAFGIWFAIGL). Topologically, residues 90–120 (CSSSSGGHFNPCVTLSFVVFKGFPKLKACRY) are cytoplasmic. Residues 99–101 (NPC) carry the NPA 1 motif. A helical transmembrane segment spans residues 121–141 (IIAQILGAYIASALVYSQWNV). At 142–157 (LIEECTLGLIKAKAYD) the chain is on the extracellular side. A helical transmembrane segment spans residues 158–178 (TTMFTPNGPAGIFALYLVPGA). The short motif at 167-169 (AGI) is the NPA 2 element. Over 179–183 (QSVPR) the chain is Cytoplasmic. The helical transmembrane segment at 184–203 (ALLNEFVNSTLIGMIIWAAL) threads the bilayer. Over 204-216 (DPTNMMVPPAMGP) the chain is Extracellular. A helical transmembrane segment spans residues 217–237 (LFISLAYAAVIWGFATPAVAL). The Cytoplasmic segment spans residues 238–264 (NTARDLGARLFAMSIWGTKAAGSGYSA). A helical membrane pass occupies residues 265 to 285 (IACLINIPATLLGVFLYEVFF). The Extracellular segment spans residues 286-307 (TDSDRGKLLPILNGKKLKHIFS).

It belongs to the MIP/aquaporin (TC 1.A.8) family.

The protein resides in the membrane. It catalyses the reaction H2O(in) = H2O(out). The catalysed reaction is NH4(+)(in) = NH4(+)(out). It carries out the reaction urea(in) = urea(out). The enzyme catalyses glycerol(in) = glycerol(out). Water channel required to facilitate the transport of water across membranes. In addition to water, also shows strong ammonium transport activity. Also enables low but statistically significant glycerol and urea permeability. May be involved in fungal nitrogen (ammonium) support of the plant host in symbiosis. The sequence is that of Aquaporin Lacbi1:387054 from Laccaria bicolor (strain S238N-H82 / ATCC MYA-4686) (Bicoloured deceiver).